The following is a 176-amino-acid chain: Co-chaperone protein HscB homolog (176 aa).

A J domain is found at 7–79 (THFSLFGLPE…LKRATYLLHL (73 aa)).

It belongs to the HscB family. As to quaternary structure, interacts with HscA and stimulates its ATPase activity.

Its function is as follows. Co-chaperone involved in the maturation of iron-sulfur cluster-containing proteins. Seems to help targeting proteins to be folded toward HscA. In Ralstonia nicotianae (strain ATCC BAA-1114 / GMI1000) (Ralstonia solanacearum), this protein is Co-chaperone protein HscB homolog.